Here is a 583-residue protein sequence, read N- to C-terminus: PTS system lactose-specific EIICB component (583 aa).

In terms of domain architecture, PTS EIIC type-3 spans 8–409 (IEKGKPFFEK…VVDVMIYYPF (402 aa)). 9 consecutive transmembrane segments (helical) span residues 30–50 (GFIAAIPIILFSSIFILITYV), 64–84 (GILMKPYNYTMGIVGLIVAGT), 103–123 (INFISTMMAAMSGFLFLAADP), 137–157 (KGLLTAFISAFITVIVYNFFI), 176–196 (VFKDIFPLSAVIIIIYALDLL), 222–242 (GWIGVTLIFGAFAFFWFVGIH), 283–303 (FVATMGGTGATLVVPFMFMWL), 339–359 (VFFIPFIFAPIVNVWIFKFFV), and 381–401 (IVMGTGFAFWSFVLAIVLIVV). Positions 453 to 462 (ANETTTTESA) are enriched in low complexity. Positions 453–475 (ANETTTTESAPSDEEVSAKNSSN) are disordered. The PTS EIIB type-3 domain maps to 480-583 (QTNVLVLCAG…LDFVQQQFEK (104 aa)). C487 acts as the Phosphocysteine intermediate; for EIIB activity in catalysis. Residue C487 is modified to Phosphocysteine; by EIIA.

The protein localises to the cell membrane. It carries out the reaction lactose(out) + N(pros)-phospho-L-histidyl-[protein] = lactose 6-phosphate(in) + L-histidyl-[protein]. Its function is as follows. The phosphoenolpyruvate-dependent sugar phosphotransferase system (sugar PTS), a major carbohydrate active transport system, catalyzes the phosphorylation of incoming sugar substrates concomitantly with their translocation across the cell membrane. The enzyme II LacEF PTS system is involved in lactose transport. This Staphylococcus haemolyticus (strain JCSC1435) protein is PTS system lactose-specific EIICB component.